Here is a 306-residue protein sequence, read N- to C-terminus: Recombination-associated protein RdgC (306 aa).

Belongs to the RdgC family.

The protein localises to the cytoplasm. It localises to the nucleoid. In terms of biological role, may be involved in recombination. The chain is Recombination-associated protein RdgC from Pseudomonas putida (strain ATCC 47054 / DSM 6125 / CFBP 8728 / NCIMB 11950 / KT2440).